Reading from the N-terminus, the 1386-residue chain is Pleckstrin homology domain-containing family G member 2 (1386 aa).

2 disordered regions span residues 1–21 and 36–82; these read MPEG…GCGR and TAPA…PLPG. Composition is skewed to low complexity over residues 8 to 17 and 45 to 62; these read LSLSKPSPSL and SPRG…GSEG. Ser-90 carries the phosphoserine modification. One can recognise a DH domain in the interval 102–283; that stretch reads RLERVAREIV…TAVAWYINDM (182 aa). The PH domain occupies 313–411; it reads ELVLEGAFRG…WIHCLQRLFF (99 aa). Disordered stretches follow at residues 436-540, 554-612, 701-739, 790-815, and 829-859; these read KSKP…PSGT, GLRD…PSPL, EPAE…EEGV, ILED…RTAS, and QQMQ…SPCL. A Phosphothreonine modification is found at Thr-445. Residues Ser-450 and Ser-469 each carry the phosphoserine modification. Acidic residues predominate over residues 592 to 603; that stretch reads SEEEEEEEEGLE. Ser-911 and Ser-1049 each carry phosphoserine. Disordered regions lie at residues 1037-1099 and 1162-1191; these read PVPK…PLPC and TSPK…DTQV. Composition is skewed to polar residues over residues 1048 to 1059 and 1073 to 1086; these read ESPTNIPLTKQG and QPIQ…SSLD. At Thr-1257 the chain carries Phosphothreonine. Phosphoserine occurs at positions 1261 and 1310. Disordered stretches follow at residues 1291-1333 and 1367-1386; these read ARRQ…ARRL and TQES…PFHM. Positions 1301-1317 are enriched in low complexity; it reads PAASRGSWSSAPTSRAS. The span at 1318–1330 shows a compositional bias: pro residues; it reads SPPPQPQPPPPPA.

In terms of biological role, may be a transforming oncogene with exchange activity for CDC42. May be a guanine-nucleotide exchange factor (GEF) for RAC1 and CDC42. Activated by the binding to subunits beta and gamma of the heterotrimeric guanine nucleotide-binding protein (G protein). Involved in the regulation of actin polymerization. This chain is Pleckstrin homology domain-containing family G member 2 (PLEKHG2), found in Homo sapiens (Human).